Here is a 309-residue protein sequence, read N- to C-terminus: Formimidoylglutamase (309 aa).

Mn(2+)-binding residues include His128, Asp153, His155, Asp157, Cys240, and Asp242.

Belongs to the arginase family. Mn(2+) serves as cofactor.

The catalysed reaction is N-formimidoyl-L-glutamate + H2O = formamide + L-glutamate. The protein operates within amino-acid degradation; L-histidine degradation into L-glutamate; L-glutamate from N-formimidoyl-L-glutamate (hydrolase route): step 1/1. Its function is as follows. Catalyzes the conversion of N-formimidoyl-L-glutamate to L-glutamate and formamide. This is Formimidoylglutamase from Staphylococcus carnosus (strain TM300).